A 301-amino-acid polypeptide reads, in one-letter code: Bifunctional protein FolD (301 aa).

Residues 166-168 (GKS), serine 191, and isoleucine 232 contribute to the NADP(+) site.

The protein belongs to the tetrahydrofolate dehydrogenase/cyclohydrolase family. As to quaternary structure, homodimer.

It catalyses the reaction (6R)-5,10-methylene-5,6,7,8-tetrahydrofolate + NADP(+) = (6R)-5,10-methenyltetrahydrofolate + NADPH. It carries out the reaction (6R)-5,10-methenyltetrahydrofolate + H2O = (6R)-10-formyltetrahydrofolate + H(+). Its pathway is one-carbon metabolism; tetrahydrofolate interconversion. Its function is as follows. Catalyzes the oxidation of 5,10-methylenetetrahydrofolate to 5,10-methenyltetrahydrofolate and then the hydrolysis of 5,10-methenyltetrahydrofolate to 10-formyltetrahydrofolate. The sequence is that of Bifunctional protein FolD from Orientia tsutsugamushi (strain Boryong) (Rickettsia tsutsugamushi).